Consider the following 212-residue polypeptide: 2,3-bisphosphoglycerate-dependent phosphoglycerate mutase (212 aa).

Substrate-binding positions include 9–16, 22–23, R61, 88–91, K99, 115–116, and 159–160; these read RHGQSEWN, TG, ERDY, RR, and GN. Catalysis depends on H10, which acts as the Tele-phosphohistidine intermediate. E88 functions as the Proton donor/acceptor in the catalytic mechanism.

It belongs to the phosphoglycerate mutase family. BPG-dependent PGAM subfamily. In terms of assembly, homodimer.

The enzyme catalyses (2R)-2-phosphoglycerate = (2R)-3-phosphoglycerate. Its pathway is carbohydrate degradation; glycolysis; pyruvate from D-glyceraldehyde 3-phosphate: step 3/5. Catalyzes the interconversion of 2-phosphoglycerate and 3-phosphoglycerate. This is 2,3-bisphosphoglycerate-dependent phosphoglycerate mutase from Methylorubrum extorquens (strain CM4 / NCIMB 13688) (Methylobacterium extorquens).